The following is a 404-amino-acid chain: V-set and immunoglobulin domain-containing protein 1 (404 aa).

The signal sequence occupies residues 1–22; that stretch reads MMVFAFWKVFLILNCLAGQVNM. Residues 23-133 form the Ig-like V-type domain; that stretch reads VQVTIPDTFV…DFFGKNQGIL (111 aa). The Extracellular segment spans residues 23 to 233; it reads VQVTIPDTFV…EIDLTSSDPE (211 aa). Residue asparagine 39 is glycosylated (N-linked (GlcNAc...) asparagine). 2 cysteine pairs are disulfide-bonded: cysteine 44-cysteine 117 and cysteine 162-cysteine 212. Positions 141 to 228 constitute an Ig-like C2-type domain; sequence PSKPFCSIQG…GNSSCEIDLT (88 aa). N-linked (GlcNAc...) asparagine glycans are attached at residues asparagine 201 and asparagine 220. The chain crosses the membrane as a helical span at residues 234–254; sequence VGIIIGALVGALTGAAIIICV. Residues 255–404 are Cytoplasmic-facing; sequence VYFARNKVKS…REEEKETVKA (150 aa). Disordered regions lie at residues 266-285 and 298-404; these read QKNLNSSTELEPMTKVHHSR and EGTL…TVKA. A phosphoserine mark is found at serine 271 and serine 272. A compositionally biased stretch (polar residues) spans 301 to 314; the sequence is LPSSIHASHNTEPT. The span at 357 to 383 shows a compositional bias: acidic residues; that stretch reads MELEPETEPEPEPEPEPQPELESELEP. Residues 393–404 show a composition bias toward basic and acidic residues; the sequence is PMREEEKETVKA.

The protein resides in the membrane. The chain is V-set and immunoglobulin domain-containing protein 1 (Vsig1) from Rattus norvegicus (Rat).